A 729-amino-acid chain; its full sequence is ATP-dependent DNA helicase Hel308 (729 aa).

Residues Q28 and 46–53 (IPTASGKT) contribute to the ATP site. The Helicase ATP-binding domain maps to 33-199 (EKGLLEGRNL…WLEAELVVSE (167 aa)). The DEAH box motif lies at 144-147 (DEVH). The region spanning 232-426 (AVNLALDTLK…SKLGTENALR (195 aa)) is the Helicase C-terminal domain. Residues 706–729 (SSGIIASEPPEKSPYSGQKTISDY) form a disordered region. A compositionally biased stretch (polar residues) spans 720–729 (YSGQKTISDY).

This sequence belongs to the helicase family. Hel308 subfamily. As to quaternary structure, monomer.

The catalysed reaction is Couples ATP hydrolysis with the unwinding of duplex DNA by translocating in the 3'-5' direction.. It carries out the reaction ATP + H2O = ADP + phosphate + H(+). In terms of biological role, DNA-dependent ATPase and 3'-5' DNA helicase that may be involved in repair of stalled replication forks. The protein is ATP-dependent DNA helicase Hel308 of Methanosarcina barkeri (strain Fusaro / DSM 804).